A 59-amino-acid polypeptide reads, in one-letter code: Ferredoxin (59 aa).

Residues lysine 2–aspartate 29 form the 4Fe-4S ferredoxin-type domain. 3 residues coordinate [4Fe-4S] cluster: cysteine 10, cysteine 13, and cysteine 16. Residues cysteine 20 and cysteine 43 are joined by a disulfide bond. Residue cysteine 51 coordinates [4Fe-4S] cluster.

It depends on [4Fe-4S] cluster as a cofactor. [3Fe-4S] cluster is required as a cofactor.

Its function is as follows. Ferredoxins are iron-sulfur proteins that transfer electrons in a wide variety of metabolic reactions. This is Ferredoxin from Thermococcus litoralis.